A 674-amino-acid chain; its full sequence is MTSVQNTESETAAGATTIGVLFAGSDPETGPAACDLDEDGRFDVTQIRDFVAARDRVDDPDIDCVVAVHEPDGFDGVAFLEAVRQTHAEFPVVVVPTAVDEDVARRAVDADATGLVPAVSEDATAAIADRIEQSAPAHSEDTETRMPISDLTVESERRLKEQALDEAPIGITISDATDPEEPIIYINDSFEDITGYSPDEVVGANHRFLQGPKTNEDRVAEFWTAITEDHDTQVVLRNYRRDGSLFWNQVDISPIYDEDGTVSHYVGFQMDVSERMAAQQELQGERQSLDRLLDRVNGLMNDVTSALVRAADREEIETRITDRIGTGGEYAGAWFGRYDATEDTITVAEAAGDCEGCDGDVFDLASAGEAVALLQDVVEQREALVSTDADGVSGTADGDACVLVPVTYRSTTYGVLAVSTAEHRIDDREQVLLRSLGRTTGASINDALTRRTIATDTVLNIGVELSDTALFLVELAGATDTTFEQEATIADSQTQGVLMLVTTPHDDPQAVVDTALGYDAVQDAEVIVSTDDESVVQFDLSSSPLVDVLSECGSRVIRMHADRTTLELDVRVGTEGAARRVLSTLRDKYADVELVAYHEDDPEQTPHGFREELRNDLTDRQLTALQKAYVSGYFEWPRRAEGKQLAESMDIVPSTYHQHLQAAKQKLVGAFFEE.

In terms of domain architecture, Response regulatory spans 19-131 (GVLFAGSDPE…DATAAIADRI (113 aa)). A PAS domain is found at 156 to 229 (ERRLKEQALD…AEFWTAITED (74 aa)). The PAC domain maps to 230–284 (HDTQVVLRNYRRDGSLFWNQVDISPIYDEDGTVSHYVGFQMDVSERMAAQQELQG). In terms of domain architecture, GAF spans 285–454 (ERQSLDRLLD…NDALTRRTIA (170 aa)). The 52-residue stretch at 617–668 (LTDRQLTALQKAYVSGYFEWPRRAEGKQLAESMDIVPSTYHQHLQAAKQKLV) folds into the HTH bat-type domain.

In terms of biological role, involved in activating bop (bacterioopsin) and brp gene expression at low-oxygen tension, which naturally occurs in stationary phase. This chain is Bacterioopsin transcriptional activator (bat), found in Halobacterium salinarum (strain ATCC 700922 / JCM 11081 / NRC-1) (Halobacterium halobium).